The sequence spans 384 residues: MGSLCSRNKHYSQADDEENTQTAEIERRIEQETKAEKHIQKLLLLGAGDSGKSTIFKQIKLLFQTGFDEEELKNYIPVIHANVYQTTKILHDGSKELAQNELEASKYLLSAENKEIGEKLSEIGGRLDYPHLTKDLVQDIEALWKDPAIQETLLRGNELQVPDCAHYFMENLERFSDVHYIPTKEDVLFARIRTTGVVEIQFSPVGENKKSGEVYRLFDVGGQRNERRKWIHLFEGVTAVIFCAAISEYDQTLFEDERKNRMMETKELFEWVLKQPCFEKTSFMLFLNKFDIFEQKVPKVPLNACEWFKDYQSVSTGKQEIEHAYEFVKKKFEESYFQCTAPDRVDRVFKIYRTTALDQKLVKKTFKLVDETLRRRNLFEAGLL.

The disordered stretch occupies residues 1 to 22 (MGSLCSRNKHYSQADDEENTQT). Glycine 2 is lipidated: N-myristoyl glycine. A lipid anchor (S-palmitoyl cysteine) is attached at cysteine 5. Residues 38–384 (HIQKLLLLGA…RRNLFEAGLL (347 aa)) enclose the G-alpha domain. Residues 41-54 (KLLLLGAGDSGKST) are G1 motif. Residues aspartate 49, serine 50, glycine 51, lysine 52, serine 53, threonine 54, aspartate 163, leucine 188, threonine 194, glycine 222, asparagine 288, lysine 289, aspartate 291, and alanine 356 each coordinate GTP. Serine 53 provides a ligand contact to Mg(2+). A G2 motif region spans residues 186 to 194 (DVLFARIRT). Residue threonine 194 participates in Mg(2+) binding. Residues 215–224 (YRLFDVGGQR) form a G3 motif region. The interval 284 to 291 (MLFLNKFD) is G4 motif. Positions 354–359 (TTALDQ) are G5 motif.

It belongs to the G-alpha family. G proteins are composed of 3 units; alpha, beta and gamma. The alpha chain contains the guanine nucleotide binding site. Mg(2+) serves as cofactor.

In terms of biological role, guanine nucleotide-binding proteins (G proteins) are involved as modulators or transducers in various transmembrane signaling systems. The sequence is that of Guanine nucleotide-binding protein alpha-1 subunit (GPA1) from Solanum lycopersicum (Tomato).